A 470-amino-acid polypeptide reads, in one-letter code: Argininosuccinate lyase (470 aa).

Belongs to the lyase 1 family. Argininosuccinate lyase subfamily.

It is found in the cytoplasm. It carries out the reaction 2-(N(omega)-L-arginino)succinate = fumarate + L-arginine. Its pathway is amino-acid biosynthesis; L-arginine biosynthesis; L-arginine from L-ornithine and carbamoyl phosphate: step 3/3. This Mycobacterium tuberculosis (strain ATCC 25618 / H37Rv) protein is Argininosuccinate lyase.